Here is a 131-residue protein sequence, read N- to C-terminus: ATP synthase epsilon chain (131 aa).

This sequence belongs to the ATPase epsilon chain family. In terms of assembly, F-type ATPases have 2 components, CF(1) - the catalytic core - and CF(0) - the membrane proton channel. CF(1) has five subunits: alpha(3), beta(3), gamma(1), delta(1), epsilon(1). CF(0) has three main subunits: a, b and c.

It localises to the cell membrane. In terms of biological role, produces ATP from ADP in the presence of a proton gradient across the membrane. This chain is ATP synthase epsilon chain, found in Bacillus pumilus (strain SAFR-032).